The chain runs to 413 residues: Porin PorA (413 aa).

An N-terminal signal peptide occupies residues 1–22 (MKKVVSSLLIILGAAMLIFAIA). The segment at 265-288 (TKSAADSKDDKKKDGDKKDEKSPE) is disordered.

It belongs to the PorA family.

It is found in the secreted. The protein resides in the cell wall. Forms water-filled channels that favor the permeation of cations. This Corynebacterium resistens (strain DSM 45100 / JCM 12819 / GTC 2026 / SICGH 158) protein is Porin PorA.